Reading from the N-terminus, the 158-residue chain is Transcription elongation factor GreA (158 aa).

The stretch at 47–68 (AEYDAAKEAQGLLEMRIAKLEE) forms a coiled coil.

The protein belongs to the GreA/GreB family.

In terms of biological role, necessary for efficient RNA polymerase transcription elongation past template-encoded arresting sites. The arresting sites in DNA have the property of trapping a certain fraction of elongating RNA polymerases that pass through, resulting in locked ternary complexes. Cleavage of the nascent transcript by cleavage factors such as GreA or GreB allows the resumption of elongation from the new 3'terminus. GreA releases sequences of 2 to 3 nucleotides. The polypeptide is Transcription elongation factor GreA (Flavobacterium johnsoniae (strain ATCC 17061 / DSM 2064 / JCM 8514 / BCRC 14874 / CCUG 350202 / NBRC 14942 / NCIMB 11054 / UW101) (Cytophaga johnsonae)).